The primary structure comprises 916 residues: Protein translocase subunit SecA (916 aa).

ATP-binding positions include Gln-87, 105-109 (GEGKT), and Asp-507. Zn(2+)-binding residues include Cys-900, Cys-902, Cys-911, and His-912.

Belongs to the SecA family. Monomer and homodimer. Part of the essential Sec protein translocation apparatus which comprises SecA, SecYEG and auxiliary proteins SecDF-YajC and YidC. The cofactor is Zn(2+).

It localises to the cell inner membrane. The protein resides in the cytoplasm. It catalyses the reaction ATP + H2O + cellular proteinSide 1 = ADP + phosphate + cellular proteinSide 2.. Functionally, part of the Sec protein translocase complex. Interacts with the SecYEG preprotein conducting channel. Has a central role in coupling the hydrolysis of ATP to the transfer of proteins into and across the cell membrane, serving both as a receptor for the preprotein-SecB complex and as an ATP-driven molecular motor driving the stepwise translocation of polypeptide chains across the membrane. The sequence is that of Protein translocase subunit SecA from Neisseria meningitidis serogroup C (strain 053442).